The sequence spans 253 residues: Phycoerythrobilin:ferredoxin oxidoreductase (253 aa).

The protein belongs to the HY2 family.

It catalyses the reaction (3Z)-phycoerythrobilin + oxidized 2[4Fe-4S]-[ferredoxin] = 15,16-dihydrobiliverdin + reduced 2[4Fe-4S]-[ferredoxin] + 2 H(+). Its function is as follows. Catalyzes the two-electron reduction of the C2 and C3(1) diene system of 15,16-dihydrobiliverdin. This Prochlorococcus marinus (strain MIT 9312) protein is Phycoerythrobilin:ferredoxin oxidoreductase.